A 161-amino-acid polypeptide reads, in one-letter code: Nucleotide-binding protein Mmc1_1670 (161 aa).

This sequence belongs to the YajQ family.

Functionally, nucleotide-binding protein. This Magnetococcus marinus (strain ATCC BAA-1437 / JCM 17883 / MC-1) protein is Nucleotide-binding protein Mmc1_1670.